A 500-amino-acid polypeptide reads, in one-letter code: MVSQTATPTATAASEPIVDVEMESAEDAETAKKDAELLAVQEIRDHARQIDKAVVSKEPRFILRVLRSLPTTRRKLALVVVGSLAVQLYPAGPERDGNQWAYIEDYPAGAQEPEGLHDPGSDKSPFAQEVDAYFHLLLLVRLLDKNDLPKATKCSQDLMAKIVGQNRRSLDLIAAKCYFYHSRVSELNNDLESIRSFLHSRLRTATLRNDFEGQAVLINCLLRNYLHYSLYDQADKLVNKSVFPETASNNECARFLYYLGRIKAAKLEYSVAHKQLVQALRKAPQQAAVGFRQTVQKLVIVVELLLGDIPERKVFRQAALRRSLGPYFQLTQAVRMGNLQRFGEVLENFGEQFRQDHTFTLIIRLRHNVIKTAIRSIGLAYSRISPQDIARKLGLDSPEDAEFIVAKAIRDGVIDATLDPEKGYMRTKESTDIYSTREPQLAFHQRISFCLDLHNQSVKAMRYPPKSYGKELESAEERREREQQDLELAKEMAEEDDDDF.

A PCI domain is found at A253 to D432. The interval R462 to Q484 is disordered. Over residues Y468–Q484 the composition is skewed to basic and acidic residues.

The protein belongs to the proteasome subunit S3 family. The 26S proteasome is composed of a core protease, known as the 20S proteasome, capped at one or both ends by the 19S regulatory complex (RC). The RC is composed of at least 18 different subunits in two subcomplexes, the base and the lid, which form the portions proximal and distal to the 20S proteolytic core, respectively.

Functionally, acts as a regulatory subunit of the 26 proteasome which is involved in the ATP-dependent degradation of ubiquitinated proteins. This chain is Probable 26S proteasome non-ATPase regulatory subunit 3 (DOXA2), found in Anopheles stephensi (Indo-Pakistan malaria mosquito).